The following is a 105-amino-acid chain: UPF0060 membrane protein Ajs_1326 (105 aa).

The next 4 membrane-spanning stretches (helical) occupy residues Phe-4–Trp-24, Ser-30–Leu-50, Ala-60–Ile-80, and Pro-82–Phe-102.

It belongs to the UPF0060 family.

It localises to the cell inner membrane. This Acidovorax sp. (strain JS42) protein is UPF0060 membrane protein Ajs_1326.